A 127-amino-acid chain; its full sequence is Large ribosomal subunit protein uL22 (127 aa).

Belongs to the universal ribosomal protein uL22 family. Part of the 50S ribosomal subunit.

Its function is as follows. This protein binds specifically to 23S rRNA; its binding is stimulated by other ribosomal proteins, e.g. L4, L17, and L20. It is important during the early stages of 50S assembly. It makes multiple contacts with different domains of the 23S rRNA in the assembled 50S subunit and ribosome. Functionally, the globular domain of the protein is located near the polypeptide exit tunnel on the outside of the subunit, while an extended beta-hairpin is found that lines the wall of the exit tunnel in the center of the 70S ribosome. This is Large ribosomal subunit protein uL22 from Methylorubrum populi (strain ATCC BAA-705 / NCIMB 13946 / BJ001) (Methylobacterium populi).